The chain runs to 392 residues: Chalcone synthase 1 (392 aa).

Residue Cys167 is part of the active site.

It belongs to the thiolase-like superfamily. Chalcone/stilbene synthases family.

It catalyses the reaction (E)-4-coumaroyl-CoA + 3 malonyl-CoA + 3 H(+) = 2',4,4',6'-tetrahydroxychalcone + 3 CO2 + 4 CoA. The protein operates within secondary metabolite biosynthesis; flavonoid biosynthesis. In terms of biological role, the primary product of this enzyme is 4,2',4',6'-tetrahydroxychalcone (also termed naringenin-chalcone or chalcone) which can under specific conditions spontaneously isomerize into naringenin. The polypeptide is Chalcone synthase 1 (CHS1) (Secale cereale (Rye)).